Here is a 190-residue protein sequence, read N- to C-terminus: Copper-binding lipoprotein NosL (190 aa).

A signal peptide spans 1-23; that stretch reads MNALHRIGAGTLLAVLLAFGLTG. C24 carries the N-palmitoyl cysteine lipid modification. A lipid anchor (S-diacylglycerol cysteine) is attached at C24. The disordered stretch occupies residues 170–190; sequence MQHGGMHDHAPNGAHNAHAGH. Positions 180–190 are enriched in low complexity; sequence PNGAHNAHAGH.

This sequence belongs to the NosL family. In terms of assembly, monomer.

It localises to the cell membrane. May act as a metallochaperone involved in nitrous oxide reductase assembly. Specifically binds Cu(+). The polypeptide is Copper-binding lipoprotein NosL (Stutzerimonas stutzeri (Pseudomonas stutzeri)).